Consider the following 507-residue polypeptide: MLDRRTLMGGILSMAGSKATGAALPGRRLRVFVATLGTETNSFSPLPTGLDAFRATMLWRPGEHPDFATEATGPLWAARERAREGRYEVIEGTCAFAMPGGPVSAQAYQLLRDEILDQLRRAMPVDIVAFGLHGAMLAFGEDECEADLLERARAIVGPDVALGAELDLHAHLSQRLVRAADVLVAFKYYPHIDYVERARDLLDLLERIRAGEIMPTSSLFNCQMVAGLATQSSPMKELVADLFEFERRGEVLSGSLIQGFRAGDVARMGSKVLIYTNNDQPAAASIAQDFGRRYQAMASIMKGNGPERSFAADIELAKAATAYPVILVDSSDNPGGGASGDNMALARAMLDNDLVPSCIGPIWDPLAVQLGFEAGLGADFSLRVGGKVGEASGLPLDVRGKITGLAENVTQNLQGSRPPLGRVVCISTAGLDIIVSEIRDQCYGPDMFRALGVEPANKRYVAVKSSEQWRIGFGDMGRSVIYVASSQQSSIRHYHKRSRPMWPFEPV.

The first 21 residues, 1–21 (MLDRRTLMGGILSMAGSKATG), serve as a signal peptide directing secretion. Aspartate 167, histidine 169, and histidine 191 together coordinate Zn(2+).

This sequence belongs to the peptidase M81 family. Requires Zn(2+) as cofactor.

With respect to regulation, inhibited by the metal chelators EDTA and 1,10-phenanthroline. Involved in peptidolytic degradation of cyclic heptapeptide hepatotoxin microcystin (MC). Cleaves both linear MC and the tetrapeptide degradation product of MC. Cleaves the Adda-Glu peptide bond of linear MC heptapeptides. This is Microcystinase C from Sphingomonas sp.